The following is a 505-amino-acid chain: Probable cytosol aminopeptidase (505 aa).

Residues Lys269 and Asp274 each contribute to the Mn(2+) site. Residue Lys281 is part of the active site. Mn(2+) is bound by residues Asp292, Asp351, and Glu353. Arg355 is an active-site residue.

This sequence belongs to the peptidase M17 family. Requires Mn(2+) as cofactor.

It is found in the cytoplasm. It carries out the reaction Release of an N-terminal amino acid, Xaa-|-Yaa-, in which Xaa is preferably Leu, but may be other amino acids including Pro although not Arg or Lys, and Yaa may be Pro. Amino acid amides and methyl esters are also readily hydrolyzed, but rates on arylamides are exceedingly low.. The catalysed reaction is Release of an N-terminal amino acid, preferentially leucine, but not glutamic or aspartic acids.. Presumably involved in the processing and regular turnover of intracellular proteins. Catalyzes the removal of unsubstituted N-terminal amino acids from various peptides. The protein is Probable cytosol aminopeptidase of Rhodococcus erythropolis (strain PR4 / NBRC 100887).